The chain runs to 100 residues: Integration host factor subunit alpha (100 aa).

Belongs to the bacterial histone-like protein family. As to quaternary structure, heterodimer of an alpha and a beta chain.

In terms of biological role, this protein is one of the two subunits of integration host factor, a specific DNA-binding protein that functions in genetic recombination as well as in transcriptional and translational control. This chain is Integration host factor subunit alpha, found in Ruegeria sp. (strain TM1040) (Silicibacter sp.).